The sequence spans 1129 residues: Large proline-rich protein bag6 (1129 aa).

A Ubiquitin-like domain is found at 1-76; that stretch reads MEVTVKTLDS…HLVERAPPQT (76 aa). Disordered stretches follow at residues 69–108, 187–235, 347–402, 490–518, 550–606, 654–692, 942–967, and 987–1009; these read VERA…PERN, QPVN…SPSE, TGNG…HPHP, PAAP…VPGA, GSNT…QHLS, VPVS…ESLP, VPQA…NGAA, and VPTI…QWAA. The span at 73–105 shows a compositional bias: low complexity; sequence PPQTQPSTGGPSTSSSTSPSSSNAANVPGAGAP. Composition is skewed to polar residues over residues 209 to 232 and 364 to 383; these read RETL…SHPS and HTPT…QPPS. 2 stretches are compositionally biased toward low complexity: residues 553–593 and 655–666; these read TPSS…SSGP and PVSTSPPQSASQ. The span at 667–686 shows a compositional bias: pro residues; that stretch reads APPPSSPSPPPAHSSPPPAA. A compositionally biased stretch (polar residues) spans 947–956; the sequence is EASSQDQPME.

Component of the bag6/bat3 complex.

The protein localises to the cytoplasm. The protein resides in the cytosol. Its subcellular location is the nucleus. It is found in the secreted. It localises to the extracellular exosome. Its function is as follows. ATP-independent molecular chaperone preventing the aggregation of misfolded and hydrophobic patches-containing proteins. Functions as part of a cytosolic protein quality control complex, the bag6/bat3 complex, which maintains these client proteins in a soluble state and participates in their proper delivery to the endoplasmic reticulum or alternatively can promote their sorting to the proteasome where they undergo degradation. The bag6/bat3 complex is involved in the post-translational delivery of tail-anchored/type II transmembrane proteins to the endoplasmic reticulum membrane. Similarly, the bag6/bat3 complex also functions as a sorting platform for proteins of the secretory pathway that are mislocalized to the cytosol either delivering them to the proteasome for degradation or to the endoplasmic reticulum. The bag6/bat3 complex also plays a role in the endoplasmic reticulum-associated degradation (ERAD), a quality control mechanism that eliminates unwanted proteins of the endoplasmic reticulum through their retrotranslocation to the cytosol and their targeting to the proteasome. It maintains these retrotranslocated proteins in an unfolded yet soluble state condition in the cytosol to ensure their proper delivery to the proteasome. Also required for selective ubiquitin-mediated degradation of defective nascent chain polypeptides by the proteasome. Also involved in endoplasmic reticulum stress-induced pre-emptive quality control, a mechanism that selectively attenuates the translocation of newly synthesized proteins into the endoplasmic reticulum and reroutes them to the cytosol for proteasomal degradation. May ensure the proper degradation of these proteins and thereby protects the endoplasmic reticulum from protein overload upon stress. By stabilizing a large spectrum of proteins, may indirectly affect different biological processes including apoptosis. By controlling the steady-state expression of the IGF1R receptor, indirectly regulates the insulin-like growth factor receptor signaling pathway. When nuclear, may also act as a component of some chromatin regulator complex. This chain is Large proline-rich protein bag6, found in Xenopus tropicalis (Western clawed frog).